We begin with the raw amino-acid sequence, 181 residues long: Large ribosomal subunit protein uL10 (181 aa).

The protein belongs to the universal ribosomal protein uL10 family. In terms of assembly, part of the ribosomal stalk of the 50S ribosomal subunit. The N-terminus interacts with L11 and the large rRNA to form the base of the stalk. The C-terminus forms an elongated spine to which L12 dimers bind in a sequential fashion forming a multimeric L10(L12)X complex.

Forms part of the ribosomal stalk, playing a central role in the interaction of the ribosome with GTP-bound translation factors. This is Large ribosomal subunit protein uL10 from Bradyrhizobium diazoefficiens (strain JCM 10833 / BCRC 13528 / IAM 13628 / NBRC 14792 / USDA 110).